A 170-amino-acid chain; its full sequence is Large ribosomal subunit protein uL10 (170 aa).

This sequence belongs to the universal ribosomal protein uL10 family. Part of the ribosomal stalk of the 50S ribosomal subunit. The N-terminus interacts with L11 and the large rRNA to form the base of the stalk. The C-terminus forms an elongated spine to which L12 dimers bind in a sequential fashion forming a multimeric L10(L12)X complex.

Forms part of the ribosomal stalk, playing a central role in the interaction of the ribosome with GTP-bound translation factors. In Chlamydia abortus (strain DSM 27085 / S26/3) (Chlamydophila abortus), this protein is Large ribosomal subunit protein uL10.